Here is a 272-residue protein sequence, read N- to C-terminus: Acetylglutamate kinase (272 aa).

Substrate is bound by residues 41-42, R63, and N166; that span reads GG.

It belongs to the acetylglutamate kinase family. ArgB subfamily.

The protein localises to the cytoplasm. The catalysed reaction is N-acetyl-L-glutamate + ATP = N-acetyl-L-glutamyl 5-phosphate + ADP. It functions in the pathway amino-acid biosynthesis; L-arginine biosynthesis; N(2)-acetyl-L-ornithine from L-glutamate: step 2/4. In terms of biological role, catalyzes the ATP-dependent phosphorylation of N-acetyl-L-glutamate. The chain is Acetylglutamate kinase from Anaeromyxobacter sp. (strain K).